The primary structure comprises 472 residues: 2-oxoisovalerate dehydrogenase subunit alpha 2, mitochondrial (472 aa).

Position 185-187 (185-187 (QYR)) interacts with thiamine diphosphate. K(+) contacts are provided by Ser-234, Thr-239, and Gln-240.

The protein belongs to the BCKDHA family. In terms of assembly, heterotetramer of alpha and beta chains. The cofactor is thiamine diphosphate.

The protein localises to the mitochondrion matrix. The enzyme catalyses N(6)-[(R)-lipoyl]-L-lysyl-[protein] + 3-methyl-2-oxobutanoate + H(+) = N(6)-[(R)-S(8)-2-methylpropanoyldihydrolipoyl]-L-lysyl-[protein] + CO2. The branched-chain alpha-keto dehydrogenase complex catalyzes the overall conversion of alpha-keto acids to acyl-CoA and CO(2). It contains multiple copies of three enzymatic components: branched-chain alpha-keto acid decarboxylase (E1), lipoamide acyltransferase (E2) and lipoamide dehydrogenase (E3). This is 2-oxoisovalerate dehydrogenase subunit alpha 2, mitochondrial from Arabidopsis thaliana (Mouse-ear cress).